Consider the following 448-residue polypeptide: tRNA-2-methylthio-N(6)-dimethylallyladenosine synthase (448 aa).

An MTTase N-terminal domain is found at Lys-3–Ala-118. [4Fe-4S] cluster contacts are provided by Cys-12, Cys-49, Cys-81, Cys-155, Cys-159, and Cys-162. The Radical SAM core domain maps to Arg-141 to Glu-374. The region spanning Gln-377–Met-440 is the TRAM domain.

Belongs to the methylthiotransferase family. MiaB subfamily. Monomer. Requires [4Fe-4S] cluster as cofactor.

The protein localises to the cytoplasm. The catalysed reaction is N(6)-dimethylallyladenosine(37) in tRNA + (sulfur carrier)-SH + AH2 + 2 S-adenosyl-L-methionine = 2-methylsulfanyl-N(6)-dimethylallyladenosine(37) in tRNA + (sulfur carrier)-H + 5'-deoxyadenosine + L-methionine + A + S-adenosyl-L-homocysteine + 2 H(+). In terms of biological role, catalyzes the methylthiolation of N6-(dimethylallyl)adenosine (i(6)A), leading to the formation of 2-methylthio-N6-(dimethylallyl)adenosine (ms(2)i(6)A) at position 37 in tRNAs that read codons beginning with uridine. This chain is tRNA-2-methylthio-N(6)-dimethylallyladenosine synthase, found in Acidovorax sp. (strain JS42).